We begin with the raw amino-acid sequence, 1401 residues long: DNA-directed RNA polymerase subunit beta' (1401 aa).

Cys70, Cys72, Cys85, and Cys88 together coordinate Zn(2+). Mg(2+) contacts are provided by Asp460, Asp462, and Asp464. Positions 808, 882, 889, and 892 each coordinate Zn(2+).

It belongs to the RNA polymerase beta' chain family. In terms of assembly, the RNAP catalytic core consists of 2 alpha, 1 beta, 1 beta' and 1 omega subunit. When a sigma factor is associated with the core the holoenzyme is formed, which can initiate transcription. Mg(2+) is required as a cofactor. It depends on Zn(2+) as a cofactor.

The enzyme catalyses RNA(n) + a ribonucleoside 5'-triphosphate = RNA(n+1) + diphosphate. DNA-dependent RNA polymerase catalyzes the transcription of DNA into RNA using the four ribonucleoside triphosphates as substrates. The sequence is that of DNA-directed RNA polymerase subunit beta' from Legionella pneumophila (strain Paris).